The chain runs to 649 residues: Glycerol-3-phosphate dehydrogenase, mitochondrial (649 aa).

Residue 69-97 (DVLIIGGGATGTGCALDAATRGLNVALVE) coordinates FAD.

This sequence belongs to the FAD-dependent glycerol-3-phosphate dehydrogenase family. It depends on FAD as a cofactor.

The protein localises to the mitochondrion inner membrane. The protein resides in the mitochondrion intermembrane space. It carries out the reaction a quinone + sn-glycerol 3-phosphate = dihydroxyacetone phosphate + a quinol. It participates in polyol metabolism; glycerol degradation via glycerol kinase pathway; glycerone phosphate from sn-glycerol 3-phosphate (anaerobic route): step 1/1. This chain is Glycerol-3-phosphate dehydrogenase, mitochondrial (GUT2), found in Saccharomyces cerevisiae (strain ATCC 204508 / S288c) (Baker's yeast).